The sequence spans 440 residues: Protein EFFECTOR OF TRANSCRIPTION (440 aa).

Residues 131 to 167 enclose the GIY-YIG domain; that stretch reads SIQGLGVAVNIHDADDISHGQTESIRTRLRSYGRPVP. Positions 172–216 are disordered; sequence LGDNASQTITQKKTGGRSKDKKHGFEEERDVSRVEAEENNTNSVH. Positions 175 to 184 are enriched in polar residues; it reads NASQTITQKK. Basic and acidic residues predominate over residues 194-207; it reads HGFEEERDVSRVEA. 2 Cx9Cx9RCx2HK repeats span residues 247 to 272 and 295 to 320; these read CGVL…TEHK and CGVI…EDHK. Residues 339–363 form a disordered region; that stretch reads ILKEDKSKPKTRTSSTNQEEPGESL. 2 Cx9Cx9RCx2HK repeats span residues 365–390 and 409–434; these read CEAT…WQHK and CGVK…QEHK.

It localises to the nucleus. Functionally, transcription regulator that negatively modulates gibberellin-mediated developmental processes. May act as transcriptional repressor of giberellin controlled genes. Binds DNA without sequence preference. The protein is Protein EFFECTOR OF TRANSCRIPTION of Brassica napus (Rape).